Consider the following 141-residue polypeptide: MLSPKRTKYRKPHRGNRKGQALRGNKISFGDFALQALEPGWITSRQIEAGRRAMSRYAKRGGKLWIRMFPDRSITARAAETRMGAGKGAPDYWVCIVKPGKILYELAGVPETIARASMRIAAYKMPVKTKFLVRDEYVAPQ.

Over residues 1–17 (MLSPKRTKYRKPHRGNR) the composition is skewed to basic residues. The interval 1 to 21 (MLSPKRTKYRKPHRGNRKGQA) is disordered.

It belongs to the universal ribosomal protein uL16 family. In terms of assembly, part of the 50S ribosomal subunit.

The protein resides in the plastid. Its subcellular location is the chloroplast. The sequence is that of Large ribosomal subunit protein uL16c from Ostreococcus tauri.